The following is a 106-amino-acid chain: Nucleoid-associated protein PD_1058 (106 aa).

It belongs to the YbaB/EbfC family. As to quaternary structure, homodimer.

It is found in the cytoplasm. Its subcellular location is the nucleoid. Its function is as follows. Binds to DNA and alters its conformation. May be involved in regulation of gene expression, nucleoid organization and DNA protection. In Xylella fastidiosa (strain Temecula1 / ATCC 700964), this protein is Nucleoid-associated protein PD_1058.